The following is a 316-amino-acid chain: Thymidylate synthase (316 aa).

Residues arginine 23 and 178-179 (RR) contribute to the dUMP site. The Nucleophile role is filled by cysteine 198. DUMP-binding positions include 218–221 (RSAD), asparagine 229, and 259–261 (HLY). Aspartate 221 contributes to the (6R)-5,10-methylene-5,6,7,8-tetrahydrofolate binding site. Alanine 315 is a (6R)-5,10-methylene-5,6,7,8-tetrahydrofolate binding site.

This sequence belongs to the thymidylate synthase family. Bacterial-type ThyA subfamily. As to quaternary structure, homodimer.

The protein resides in the cytoplasm. The catalysed reaction is dUMP + (6R)-5,10-methylene-5,6,7,8-tetrahydrofolate = 7,8-dihydrofolate + dTMP. Its pathway is pyrimidine metabolism; dTTP biosynthesis. Its function is as follows. Catalyzes the reductive methylation of 2'-deoxyuridine-5'-monophosphate (dUMP) to 2'-deoxythymidine-5'-monophosphate (dTMP) while utilizing 5,10-methylenetetrahydrofolate (mTHF) as the methyl donor and reductant in the reaction, yielding dihydrofolate (DHF) as a by-product. This enzymatic reaction provides an intracellular de novo source of dTMP, an essential precursor for DNA biosynthesis. The sequence is that of Thymidylate synthase from Lacticaseibacillus casei (Lactobacillus casei).